The primary structure comprises 289 residues: AAQALGRALVSAKWLSEAVRAGRVGAGLRVLDASWYPPEERDARQEFKERHIPGASFFNIEECRDKSSPYDFMLPSEAHFADYVGRLGVSNDTHVVVYDGDELGTFYAPRAWWMFRAFGHREVSVLNGGFKNWVKEGHPVTAEPSQPAEAVFKAKLDKTLLKTFEQAMENVGSKKFQVVDSRPAGRFQGTELDQGLESGHIPGAVNMPFSTFLTESGHEKSIEEIQQMFREKKVDLSKPLTATCRKGVTACHIALAAYLCGKPDVAVYDGSWSEWFHRAPPQYKVTELK.

The 119-residue stretch at 24–142 (VGAGLRVLDA…WVKEGHPVTA (119 aa)) folds into the Rhodanese 1 domain. The hinge stretch occupies residues 143–158 (EPSQPAEAVFKAKLDK). Residues 172-284 (GSKKFQVVDS…WFHRAPPQYK (113 aa)) form the Rhodanese 2 domain. Arginine 186 lines the substrate pocket. Cysteine 244 (cysteine persulfide intermediate) is an active-site residue. Residue lysine 246 participates in substrate binding.

Monomer. In terms of tissue distribution, expressed in numerous tissues.

Its subcellular location is the mitochondrion matrix. The catalysed reaction is thiosulfate + hydrogen cyanide = thiocyanate + sulfite + 2 H(+). Its function is as follows. Together with MRPL18, acts as a mitochondrial import factor for the cytosolic 5S rRNA. Only the nascent unfolded cytoplasmic form is able to bind to the 5S rRNA. Formation of iron-sulfur complexes and cyanide detoxification. This is Thiosulfate sulfurtransferase (TST) from Gallus gallus (Chicken).